The following is a 619-amino-acid chain: Chaperone protein HscA homolog (619 aa).

Belongs to the heat shock protein 70 family.

Chaperone involved in the maturation of iron-sulfur cluster-containing proteins. Has a low intrinsic ATPase activity which is markedly stimulated by HscB. The polypeptide is Chaperone protein HscA homolog (Haemophilus influenzae (strain PittGG)).